The primary structure comprises 599 residues: Purine-uracil permease NCS1 (599 aa).

The next 12 helical transmembrane spans lie at 140–160, 164–184, 218–238, 257–277, 293–313, 327–347, 363–383, 411–433, 445–465, 474–494, 525–545, and 560–580; these read LWIGLVVGVPTYYLAGSLVDL, WWQGIATVVTANLILLVPLVL, LVGCGWYGIETWIGGEAIFLL, TSPLEFSCFIVFWLAQLCIVW, ILISLTSCLLAWSYLKAGGFG, FWTLFFPSLTANISFWATLAL, IIGQVGLPVFMGLFTFVGVAV, TLLAIVGISLATLTTNIAANVVA, FFTFGRGAFLTAVLGIVFQPW, FVYTWLIGYSALLGPIGGIIL, YNVAAVVALVAGIIPVVPGFL, and VVYDNALFFSFIIAGFVYWII.

Belongs to the purine-cytosine permease (2.A.39) family. In terms of tissue distribution, expressed in roots, leaves, stems, flowers, siliques and seeds.

The protein resides in the plastid. It is found in the chloroplast envelope. It localises to the chloroplast membrane. Nucleobase-proton symporter that facilitates the uptake of nucleobases in the cells. Can transport adenine, guanine and uracil. Contributes to uracil import into plastids for plastidic uracil salvage which is essential for plant growth and development. This Arabidopsis thaliana (Mouse-ear cress) protein is Purine-uracil permease NCS1.